The chain runs to 377 residues: RCC1 domain-containing protein 1 (377 aa).

Positions Met-1–His-172 are interaction with KDM8. An RCC1 1 repeat occupies His-6–Arg-57. A (3R)-3-hydroxyarginine modification is found at Arg-144. RCC1 repeat units follow at residues Ala-179 to Glu-230, Gly-232 to Gln-289, and Thr-319 to Met-372.

As to quaternary structure, found in a complex with KDM8. Interacts (via N-terminus) with KDM8 (via N-terminus). Specifically hydroxylated (with R stereochemistry) at C-3 of ARG-141 by KDM8.

It localises to the chromosome. Functionally, plays a role in transcriptional repression of satellite repeats, possibly by regulating H3K36 methylation levels in centromeric regions together with KDM8. Possibly together with KDM8, is involved in proper mitotic spindle organization and chromosome segregation. Plays a role in regulating alpha-tubulin deacetylation and cytoskeletal microtubule stability, thereby promoting cell migration and TGF-beta-induced epithelial to mesenchymal transition (EMT), potentially through the inhibition of KDM8. The chain is RCC1 domain-containing protein 1 (Rccd1) from Mus musculus (Mouse).